The sequence spans 448 residues: Noelin-2 (448 aa).

Positions 1 to 14 (MRKLRQTGTTIAGG) are cleaved as a signal peptide. Coiled-coil stretches lie at residues 52–79 (RDGR…LELR) and 130–187 (LEQY…AQKL). N-linked (GlcNAc...) asparagine glycosylation is found at Asn68, Asn149, Asn269, Asn304, Asn393, and Asn435. Residues 188-440 (GCGKLTGVSN…QVLYNVTLFH (253 aa)) enclose the Olfactomedin-like domain. The cysteines at positions 189 and 371 are disulfide-linked.

As to quaternary structure, peripherally associated with AMPAR complex. AMPAR complex consists of an inner core made of 4 pore-forming GluA/GRIA proteins (GRIA1, GRIA2, GRIA3 and GRIA4) and 4 major auxiliary subunits arranged in a twofold symmetry. One of the two pairs of distinct binding sites is occupied either by CNIH2, CNIH3 or CACNG2, CACNG3. The other harbors CACNG2, CACNG3, CACNG4, CACNG8 or GSG1L. This inner core of AMPAR complex is complemented by outer core constituents binding directly to the GluA/GRIA proteins at sites distinct from the interaction sites of the inner core constituents. Outer core constituents include at least PRRT1, PRRT2, CKAMP44/SHISA9, FRRS1L and NRN1. The proteins of the inner and outer core serve as a platform for other, more peripherally associated AMPAR constituents, including OLFM2. Alone or in combination, these auxiliary subunits control the gating and pharmacology of the AMPAR complex and profoundly impact their biogenesis and protein processing. Interacts with GRIA2. Interacts with OLFM1 and OLFM3. Interacts with SRF; the interaction promotes dissociation of SRF from the transcriptional repressor HEY2. Interacts with RUNX2. Expressed in the brain (at protein level). In the developing eye, first detected at 12 dpc in the retinal pigmented epithelium and preferentially expressed in differentiating retinal ganglion cells between 15 and 18 dpc. In the brain, expression is detected mainly in the olfactory bulb, cortex, piriform cortex, olfactory trabeculae, and inferior and superior colliculus. In the adult eye, expression is detected mainly in retinal ganglion cells. Expressed in carotid arteries.

It is found in the secreted. Its subcellular location is the synapse. It localises to the membrane. The protein resides in the nucleus. The protein localises to the cytoplasm. In terms of biological role, involved in transforming growth factor beta (TGF-beta)-induced smooth muscle differentiation. TGF-beta induces expression and nuclear translocation of OLFM2 where it binds to SRF, causing its dissociation from the transcriptional repressor HEY2/HERP1 and facilitating binding of SRF to target genes. Plays a role in AMPAR complex organization. Is a regulator of vascular smooth-muscle cell (SMC) phenotypic switching, that acts by promoting RUNX2 and inhibiting MYOCD binding to SRF. SMC phenotypic switching is the process through which vascular SMCs undergo transition between a quiescent contractile phenotype and a proliferative synthetic phenotype in response to pathological stimuli. SMC phenotypic plasticity is essential for vascular development and remodeling. The polypeptide is Noelin-2 (Olfm2) (Mus musculus (Mouse)).